A 337-amino-acid polypeptide reads, in one-letter code: 4-hydroxyproline 2-epimerase (337 aa).

The active-site Proton acceptor is the C91. Substrate contacts are provided by residues 92–93 (GH), D252, and 257–258 (GT).

This sequence belongs to the proline racemase family.

The enzyme catalyses trans-4-hydroxy-L-proline = cis-4-hydroxy-D-proline. In terms of biological role, catalyzes the epimerization of trans-4-hydroxy-L-proline (t4LHyp) to cis-4-hydroxy-D-proline (c4DHyp). Is involved in a degradation pathway that converts t4LHyp to alpha-ketoglutarate, which allows R.sphaeroides to grow on t4LHyp as a sole carbon source. Displays no proline racemase activity. This is 4-hydroxyproline 2-epimerase from Cereibacter sphaeroides (strain ATCC 17023 / DSM 158 / JCM 6121 / CCUG 31486 / LMG 2827 / NBRC 12203 / NCIMB 8253 / ATH 2.4.1.) (Rhodobacter sphaeroides).